The sequence spans 489 residues: Betaine aldehyde dehydrogenase (489 aa).

K(+)-binding residues include threonine 26 and aspartate 93. 150-152 (GAW) contacts NAD(+). Lysine 162 functions as the Charge relay system in the catalytic mechanism. 176–179 (KPSE) serves as a coordination point for NAD(+). Valine 180 is a binding site for K(+). 229–232 (GVET) lines the NAD(+) pocket. Leucine 245 lines the K(+) pocket. Glutamate 251 acts as the Proton acceptor in catalysis. Positions 253, 285, and 386 each coordinate NAD(+). The active-site Nucleophile is the cysteine 285. Cysteine 285 carries the cysteine sulfenic acid (-SOH) modification. K(+) is bound by residues lysine 456 and glycine 459. The active-site Charge relay system is the glutamate 463.

It belongs to the aldehyde dehydrogenase family. Dimer of dimers. It depends on K(+) as a cofactor.

It catalyses the reaction betaine aldehyde + NAD(+) + H2O = glycine betaine + NADH + 2 H(+). The protein operates within amine and polyamine biosynthesis; betaine biosynthesis via choline pathway; betaine from betaine aldehyde: step 1/1. Involved in the biosynthesis of the osmoprotectant glycine betaine. Catalyzes the irreversible oxidation of betaine aldehyde to the corresponding acid. This chain is Betaine aldehyde dehydrogenase, found in Burkholderia pseudomallei (strain 1106a).